The chain runs to 258 residues: Leucyl/phenylalanyl-tRNA--protein transferase (258 aa).

Positions 199–220 (GGSDGPAPDQSIGMSSSGGVSD) are disordered. A compositionally biased stretch (low complexity) spans 209 to 220 (SIGMSSSGGVSD).

The protein belongs to the L/F-transferase family.

It localises to the cytoplasm. It catalyses the reaction N-terminal L-lysyl-[protein] + L-leucyl-tRNA(Leu) = N-terminal L-leucyl-L-lysyl-[protein] + tRNA(Leu) + H(+). The enzyme catalyses N-terminal L-arginyl-[protein] + L-leucyl-tRNA(Leu) = N-terminal L-leucyl-L-arginyl-[protein] + tRNA(Leu) + H(+). The catalysed reaction is L-phenylalanyl-tRNA(Phe) + an N-terminal L-alpha-aminoacyl-[protein] = an N-terminal L-phenylalanyl-L-alpha-aminoacyl-[protein] + tRNA(Phe). Its function is as follows. Functions in the N-end rule pathway of protein degradation where it conjugates Leu, Phe and, less efficiently, Met from aminoacyl-tRNAs to the N-termini of proteins containing an N-terminal arginine or lysine. This Hyphomonas neptunium (strain ATCC 15444) protein is Leucyl/phenylalanyl-tRNA--protein transferase.